The chain runs to 155 residues: Ribosome maturation factor RimP (155 aa).

The protein belongs to the RimP family.

The protein localises to the cytoplasm. In terms of biological role, required for maturation of 30S ribosomal subunits. This is Ribosome maturation factor RimP from Desulforapulum autotrophicum (strain ATCC 43914 / DSM 3382 / VKM B-1955 / HRM2) (Desulfobacterium autotrophicum).